The primary structure comprises 431 residues: Glutamate--tRNA ligase 1 (431 aa).

The 'HIGH' region motif lies at 6–16; sequence PSPTGDMHIGN. The 'KMSKS' region signature appears at 235 to 239; sequence KMSKR. Lys238 lines the ATP pocket.

This sequence belongs to the class-I aminoacyl-tRNA synthetase family. Glutamate--tRNA ligase type 1 subfamily. In terms of assembly, monomer.

Its subcellular location is the cytoplasm. It catalyses the reaction tRNA(Glu) + L-glutamate + ATP = L-glutamyl-tRNA(Glu) + AMP + diphosphate. Its function is as follows. Catalyzes the attachment of glutamate to tRNA(Glu) in a two-step reaction: glutamate is first activated by ATP to form Glu-AMP and then transferred to the acceptor end of tRNA(Glu). The sequence is that of Glutamate--tRNA ligase 1 from Campylobacter jejuni subsp. jejuni serotype O:6 (strain 81116 / NCTC 11828).